Consider the following 384-residue polypeptide: 4-hydroxy-3-methylbut-2-en-1-yl diphosphate synthase (flavodoxin) (384 aa).

Residues C280, C283, C315, and E322 each contribute to the [4Fe-4S] cluster site.

It belongs to the IspG family. Requires [4Fe-4S] cluster as cofactor.

It catalyses the reaction (2E)-4-hydroxy-3-methylbut-2-enyl diphosphate + oxidized [flavodoxin] + H2O + 2 H(+) = 2-C-methyl-D-erythritol 2,4-cyclic diphosphate + reduced [flavodoxin]. It participates in isoprenoid biosynthesis; isopentenyl diphosphate biosynthesis via DXP pathway; isopentenyl diphosphate from 1-deoxy-D-xylulose 5-phosphate: step 5/6. Functionally, converts 2C-methyl-D-erythritol 2,4-cyclodiphosphate (ME-2,4cPP) into 1-hydroxy-2-methyl-2-(E)-butenyl 4-diphosphate. This Frankia casuarinae (strain DSM 45818 / CECT 9043 / HFP020203 / CcI3) protein is 4-hydroxy-3-methylbut-2-en-1-yl diphosphate synthase (flavodoxin).